Consider the following 95-residue polypeptide: Large ribosomal subunit protein uL23c (95 aa).

The protein belongs to the universal ribosomal protein uL23 family. In terms of assembly, part of the 50S ribosomal subunit.

It localises to the plastid. Its subcellular location is the chloroplast. Binds to 23S rRNA. This Guillardia theta (Cryptophyte) protein is Large ribosomal subunit protein uL23c (rpl23).